We begin with the raw amino-acid sequence, 734 residues long: Probable carboxypeptidase X1 (734 aa).

Positions 1-20 are cleaved as a signal peptide; that stretch reads MWGLLLALAAFAPAVGPALG. The tract at residues 30-62 is disordered; sequence AQPGTTKVPGSTPALHSSPAQPPAETANGTSEQ. Residues 32–48 are compositionally biased toward polar residues; that stretch reads PGTTKVPGSTPALHSSP. N-linked (GlcNAc...) asparagine glycans are attached at residues Asn57, Asn210, Asn220, and Asn318. The region spanning 113 to 274 is the F5/8 type C domain; that stretch reads TGCPPLGLES…PCLRAEILAC (162 aa). An intrachain disulfide couples Cys115 to Cys274. In terms of domain architecture, Peptidase M14 spans 298 to 621; it reads QHHNYKAMRK…DALLTYLEQV (324 aa). Residues His360 and Glu363 each contribute to the Zn(2+) site. 2 N-linked (GlcNAc...) asparagine glycosylation sites follow: Asn428 and Asn472. His498 is a binding site for Zn(2+). The active-site Proton donor/acceptor is Glu591.

This sequence belongs to the peptidase M14 family. The cofactor is Zn(2+).

The protein resides in the secreted. Functionally, may be involved in cell-cell interactions. No carboxypeptidase activity was found yet. This Homo sapiens (Human) protein is Probable carboxypeptidase X1 (CPXM1).